The following is a 326-amino-acid chain: Ribose-phosphate pyrophosphokinase (326 aa).

Residues 45-47 (NGE) and 104-105 (RQ) each bind ATP. 2 residues coordinate Mg(2+): His138 and Asp178. Lys202 is a catalytic residue. D-ribose 5-phosphate contacts are provided by residues Arg204, Asp230, and 234–238 (DTGGT).

Belongs to the ribose-phosphate pyrophosphokinase family. Class I subfamily. In terms of assembly, homohexamer. Requires Mg(2+) as cofactor.

It is found in the cytoplasm. The catalysed reaction is D-ribose 5-phosphate + ATP = 5-phospho-alpha-D-ribose 1-diphosphate + AMP + H(+). It functions in the pathway metabolic intermediate biosynthesis; 5-phospho-alpha-D-ribose 1-diphosphate biosynthesis; 5-phospho-alpha-D-ribose 1-diphosphate from D-ribose 5-phosphate (route I): step 1/1. Functionally, involved in the biosynthesis of the central metabolite phospho-alpha-D-ribosyl-1-pyrophosphate (PRPP) via the transfer of pyrophosphoryl group from ATP to 1-hydroxyl of ribose-5-phosphate (Rib-5-P). This is Ribose-phosphate pyrophosphokinase from Mycobacterium bovis (strain ATCC BAA-935 / AF2122/97).